The sequence spans 205 residues: Protein DEPP1 (205 aa).

Polar residues-rich tracts occupy residues 55–64 and 83–101; these read DKVTAQSRPN and GDSSLCVSSLQPTLPSPGT. The segment at 55 to 171 is disordered; that stretch reads DKVTAQSRPN…RHQTSDLKSW (117 aa). Residues 138–155 are compositionally biased toward basic and acidic residues; that stretch reads MGKDTGRLCEARVPEHSL.

The protein localises to the cytoplasm. It localises to the peroxisome. Its subcellular location is the mitochondrion. Functionally, acts as a critical modulator of FOXO3-induced autophagy via increased cellular ROS. In Mus musculus (Mouse), this protein is Protein DEPP1 (Depp1).